The primary structure comprises 433 residues: Zuotin (433 aa).

Position 50 is a phosphoserine (S50). In terms of domain architecture, J spans 98 to 170 (LYAAMGLSKL…RAQYDSCDFV (73 aa)). Over residues 292 to 330 (EEKKEKERRKWEREAGARAEAEAKAKAEAEAKAKAESEA) the composition is skewed to basic and acidic residues. Residues 292–357 (EEKKEKERRK…KAAKKKNKRA (66 aa)) form a disordered region.

As to quaternary structure, RAC is a heterodimer of the Hsp70/DnaK-type chaperone SSZ1 and the Hsp40/DnaJ-type chaperone ZUO1. RAC associates with ribosomes via ZUO1.

It is found in the cytoplasm. Functionally, component of the ribosome-associated complex (RAC), a heterodimeric chaperone complex involved in regulation of accurate translation termination and in folding or maintaining nascent polypeptides in a folding-competent state. RAC stimulates the ATPase activity of the ribosome-associated pool of Hsp70-type chaperones SSB1/SSB2 that bind to the nascent polypeptide chain. ZUO1 can act as a J-protein for SSB1/SSB2 only when associated with SSZ1. The polypeptide is Zuotin (ZUO1) (Saccharomyces cerevisiae (strain ATCC 204508 / S288c) (Baker's yeast)).